A 408-amino-acid chain; its full sequence is Dicamba O-demethylase 1, ferredoxin reductase component (408 aa).

FAD is bound by residues Gly14, Lys49, Val82, Arg130, Asp279, and Val298.

This sequence belongs to the FAD-dependent oxidoreductase family. As to quaternary structure, monomer. The dicamba O-demethylase multicomponent enzyme system is composed of an oxygenase component (DdmC) and an electron transfer component formed by a ferredoxin reductase (DdmA1) and a ferredoxin (DdmB). In vitro, dicamba O-demethylase assays in which DdmA2 is substituted for DdmA1 demonstrate that the two enzymes possess nearly identical activities. The cofactor is FAD.

The catalysed reaction is 2 reduced [2Fe-2S]-[ferredoxin] + NAD(+) + H(+) = 2 oxidized [2Fe-2S]-[ferredoxin] + NADH. Functionally, component of the dicamba O-demethylase multicomponent enzyme system involved in the degradation of the herbicide dicamba. In vitro, catalyzes the transfers of electrons from ferredoxin (DdmB) to NADH. Both NADH and NADPH support enzyme activity, with NADH being markedly more effective than NADPH. This is Dicamba O-demethylase 1, ferredoxin reductase component from Stenotrophomonas maltophilia (Pseudomonas maltophilia).